A 609-amino-acid chain; its full sequence is UvrABC system protein C (609 aa).

One can recognise a GIY-YIG domain in the interval 16–94; that stretch reads SSAGVYRMYD…IKQYMPKYNV (79 aa). The UVR domain occupies 203–238; it reads QQVISALVDKMELAAERQAYEQAARFRDQIMALRKV.

It belongs to the UvrC family. Interacts with UvrB in an incision complex.

The protein localises to the cytoplasm. Functionally, the UvrABC repair system catalyzes the recognition and processing of DNA lesions. UvrC both incises the 5' and 3' sides of the lesion. The N-terminal half is responsible for the 3' incision and the C-terminal half is responsible for the 5' incision. This is UvrABC system protein C from Shewanella baltica (strain OS155 / ATCC BAA-1091).